We begin with the raw amino-acid sequence, 59 residues long: Large ribosomal subunit protein uL30 (59 aa).

This sequence belongs to the universal ribosomal protein uL30 family. Part of the 50S ribosomal subunit.

This chain is Large ribosomal subunit protein uL30, found in Ruminiclostridium cellulolyticum (strain ATCC 35319 / DSM 5812 / JCM 6584 / H10) (Clostridium cellulolyticum).